We begin with the raw amino-acid sequence, 132 residues long: Interleukin-5 (132 aa).

An N-terminal signal peptide occupies residues 1–19 (MHLRLTLVALGAAYVCANA). N-linked (GlcNAc...) asparagine glycans are attached at residues asparagine 74 and asparagine 88.

It belongs to the IL-5 family. In terms of assembly, homodimer; disulfide-linked. Interacts with IL5RA. Interacts with CSF2RB.

The protein localises to the secreted. Homodimeric cytokine expressed predominantly by T-lymphocytes and NK cells that plays an important role in the survival, differentiation, and chemotaxis of eosinophils. Also acts on activated and resting B-cells to induce immunoglobulin production, growth, and differentiation. Mechanistically, exerts its biological effects through a receptor composed of IL5RA subunit and the cytokine receptor common subunit beta/CSF2RB. Binding to the receptor leads to activation of various kinases including LYN, SYK and JAK2 and thereby propagates signals through the RAS-MAPK and JAK-STAT5 pathways respectively. This Ovis aries (Sheep) protein is Interleukin-5 (IL5).